We begin with the raw amino-acid sequence, 42 residues long: Alpha-conotoxin VnIB (42 aa).

A propeptide spanning residues 1-22 (ASDGRNAAADDKASDPIALTVR) is cleaved from the precursor. 2 disulfide bridges follow: cysteine 25/cysteine 31 and cysteine 26/cysteine 38. Glycine 39 carries the glycine amide modification.

The protein belongs to the conotoxin A superfamily. Expressed by the venom duct.

Its subcellular location is the secreted. In terms of biological role, alpha-conotoxins act on postsynaptic membranes, they bind to the nicotinic acetylcholine receptors (nAChR) and thus inhibit them. This toxin potently and selectively inhibits human and rat alpha-6-beta-4/CHRNA6-CHRNB4 nAChR (IC(50)=12 nM on rat nAChR). It exhibits rapid binding and unbinding at this receptor. It also shows activity on rat alpha-6-beta-4/CHRNA6-CHRNB4 (IC(50)=12 nM), human alpha-6/alpha-3-beta-4 (CHRNA6/CHRNA3-CHRNB4) (IC(50)=5.3 nM), rat alpha-6/alpha-3-beta-4 (CHRNA6/CHRNA3-CHRNB4) (IC(50)=18 nM), rat alpha-3-beta-4/CHRNA3-CHRNB4 (IC(50)=320 nM), and rat alpha-6/alpha-3-beta-2-beta-3 (CHRNA6/CHRNA3-CHRNB2-CHRNB3) (IC(50)=4 uM). The protein is Alpha-conotoxin VnIB of Conus ventricosus (Mediterranean cone).